We begin with the raw amino-acid sequence, 296 residues long: Ribosomal RNA small subunit methyltransferase A (296 aa).

Asn-31, Leu-33, Gly-58, Glu-79, Asp-111, and Asn-136 together coordinate S-adenosyl-L-methionine.

It belongs to the class I-like SAM-binding methyltransferase superfamily. rRNA adenine N(6)-methyltransferase family. RsmA subfamily.

Its subcellular location is the cytoplasm. The enzyme catalyses adenosine(1518)/adenosine(1519) in 16S rRNA + 4 S-adenosyl-L-methionine = N(6)-dimethyladenosine(1518)/N(6)-dimethyladenosine(1519) in 16S rRNA + 4 S-adenosyl-L-homocysteine + 4 H(+). Specifically dimethylates two adjacent adenosines (A1518 and A1519) in the loop of a conserved hairpin near the 3'-end of 16S rRNA in the 30S particle. May play a critical role in biogenesis of 30S subunits. The chain is Ribosomal RNA small subunit methyltransferase A from Lactobacillus johnsonii (strain CNCM I-12250 / La1 / NCC 533).